The chain runs to 273 residues: Mitochondrial distribution and morphology protein 12 (273 aa).

The SMP-LTD domain occupies 1 to 273 (MSIDFDWSKL…LVWPSYITIE (273 aa)). A disordered region spans residues 124 to 145 (LTSPIPESRPSTPMDNHQERDR).

Belongs to the MDM12 family. As to quaternary structure, component of the ER-mitochondria encounter structure (ERMES) or MDM complex, composed of mmm1, mdm10, mdm12 and mdm34. A mmm1 homodimer associates with one molecule of mdm12 on each side in a pairwise head-to-tail manner, and the SMP-LTD domains of mmm1 and mdm12 generate a continuous hydrophobic tunnel for phospholipid trafficking.

It is found in the mitochondrion outer membrane. It localises to the endoplasmic reticulum membrane. Its function is as follows. Component of the ERMES/MDM complex, which serves as a molecular tether to connect the endoplasmic reticulum (ER) and mitochondria. Components of this complex are involved in the control of mitochondrial shape and protein biogenesis, and function in nonvesicular lipid trafficking between the ER and mitochondria. Mdm12 is required for the interaction of the ER-resident membrane protein mmm1 and the outer mitochondrial membrane-resident beta-barrel protein mdm10. The mdm12-mmm1 subcomplex functions in the major beta-barrel assembly pathway that is responsible for biogenesis of all mitochondrial outer membrane beta-barrel proteins, and acts in a late step after the SAM complex. The mdm10-mdm12-mmm1 subcomplex further acts in the TOM40-specific pathway after the action of the mdm12-mmm1 complex. Essential for establishing and maintaining the structure of mitochondria and maintenance of mtDNA nucleoids. In Schizosaccharomyces pombe (strain 972 / ATCC 24843) (Fission yeast), this protein is Mitochondrial distribution and morphology protein 12.